Consider the following 764-residue polypeptide: MVNELENVPRASTLTNEEQTVDPSNNDSQEDISLGDSNEITSLASLKAIRSGNEEESGNEQVNHNDEAEEDPLLTRYHTACQRGDLATVKEMIHGKLLEVNNDGDSTEHITGLHWASINNRLSVVDFLVSQGADVNARAGALHATPLHWAARYGYVYIVDFLLKHGADPTMTDDQGFNLLHLSVNSSNIMLVLYVLFNVVSKGLLDIDCRDPKGRTSLLWAAYQGDSLTVAELLKFGASIKIADTEGFTPLHWGTVKGQPHVLKYLIQDGADFFQKTDTGKDCFAIAQEMNTVYSLREALTHSGFDYHGYPIKKWFKKSQHAKLVTFITPFLFLGIAFALFSHINPLFVIIVLFLLAIATNKGLNKFVLPSYGRMGVHNVTLLRSPLLSGVFFGTLLWVTIVWFFKVMPRTFSDEQYTNILMLVILVSVFYLFGQLVIMDPGCLPEETDHENVRQTISNLLEIGKFDTKNFCIETWIRKPLRSKFSPLNNAVVARFDHYCPWIFNDVGLKNHKAFIFFITLMESGIFTFLALCLEYFDELEDAHEDTSQKNGKCFILGASDLCSGLIYDRFVFLILLWALLQSIWVASLIFVQAFQICKGMTNTEFNVLMKESKSIGPDGLSFNENFNTTPEGFAPSIDPGEESNDTVLAPVPGSTIRKPRTCFGVCYAVTGMDQWLAVIKETIGIKDSTGHNVYSITSRIPTNYGWKRNVKDFWLTSDINAPLWRRILYPPSGSKALLNGIEVDYFKLYKLPNKDVEQGNDMV.

Disordered stretches follow at residues 1–38 (MVNE…GDSN) and 51–71 (SGNE…AEED). The Cytoplasmic portion of the chain corresponds to 1-321 (MVNELENVPR…IKKWFKKSQH (321 aa)). The span at 10-27 (RASTLTNEEQTVDPSNND) shows a compositional bias: polar residues. Phosphoserine is present on residues S51 and S57. ANK repeat units lie at residues 72 to 102 (PLLT…EVNN), 108 to 137 (EHIT…DVNA), 142 to 171 (LHAT…DPTM), 175 to 204 (QGFN…SKGL), 213 to 242 (KGRT…SIKI), and 246 to 275 (EGFT…DFFQ). Residues 322–341 (AKLVTFITPFLFLGIAFALF) form a helical membrane-spanning segment. Residues 342 to 346 (SHINP) are Lumenal-facing. Residues 347–364 (LFVIIVLFLLAIATNKGL) traverse the membrane as a helical segment. The Cytoplasmic portion of the chain corresponds to 365 to 384 (NKFVLPSYGRMGVHNVTLLR). A helical transmembrane segment spans residues 385 to 405 (SPLLSGVFFGTLLWVTIVWFF). Residues 406–418 (KVMPRTFSDEQYT) are Lumenal-facing. Residues 419–439 (NILMLVILVSVFYLFGQLVIM) form a helical membrane-spanning segment. Residues 440 to 513 (DPGCLPEETD…FNDVGLKNHK (74 aa)) are Cytoplasmic-facing. Residues 470-520 (NFCIETWIRKPLRSKFSPLNNAVVARFDHYCPWIFNDVGLKNHKAFIFFIT) form the DHHC domain. The S-palmitoyl cysteine intermediate role is filled by C500. A helical transmembrane segment spans residues 514-534 (AFIFFITLMESGIFTFLALCL). The Lumenal portion of the chain corresponds to 535 to 570 (EYFDELEDAHEDTSQKNGKCFILGASDLCSGLIYDR). Residues 571 to 591 (FVFLILLWALLQSIWVASLIF) form a helical membrane-spanning segment. Residues 592–764 (VQAFQICKGM…KDVEQGNDMV (173 aa)) lie on the Cytoplasmic side of the membrane.

The protein belongs to the DHHC palmitoyltransferase family. AKR/ZDHHC17 subfamily.

Its subcellular location is the early endosome membrane. It is found in the golgi apparatus membrane. The catalysed reaction is L-cysteinyl-[protein] + hexadecanoyl-CoA = S-hexadecanoyl-L-cysteinyl-[protein] + CoA. Its function is as follows. Palmitoyltransferase specific for casein kinase 1. Palmitoylates isoforms YCK1 and YCK2 at both C-terminal cysteine residues, which is required for their proper plasma membrane localization. Required for constitutive endocytosis of a-factor receptor STE3 and both constitutive and pheromone-induced endocytosis of alpha-factor receptor STE2. The chain is Palmitoyltransferase AKR1 (AKR1) from Saccharomyces cerevisiae (strain ATCC 204508 / S288c) (Baker's yeast).